We begin with the raw amino-acid sequence, 64 residues long: Beta-defensin 13 (64 aa).

An N-terminal signal peptide occupies residues M1–G22. Intrachain disulfides connect C30/C57, C37/C51, and C41/C58.

This sequence belongs to the beta-defensin family. In terms of tissue distribution, expressed in testis and to a lesser extent in epididymis (caput, corpus and cauda). Also weakly expressed in kidneys.

The protein localises to the secreted. Its function is as follows. Has antibacterial activity. The protein is Beta-defensin 13 (Defb13) of Mus musculus (Mouse).